Here is a 260-residue protein sequence, read N- to C-terminus: Winged helix repair factor 1 (260 aa).

3 winged helix domain regions span residues 38–110 (FTED…MVVM), 126–185 (SRAT…LAVP), and 186–260 (GAGR…ISET).

It belongs to the STK19 family. In terms of assembly, monomer in solution. Homodimer; when bound to DNA. Component of a transcription-coupled nucleotide excision repair (TC-NER) complex which assembles and interacts with the multiprotein RNA polymerase II complex when it stalls at DNA lesions.

The protein resides in the nucleus. Functionally, DNA-binding protein which is required for efficient transcription-coupled nucleotide excision repair (TC-NER). Acts as part of a TC-NER complex which assembles and interacts with RNA polymerase II (RNAPII) when it stalls at DNA lesions. The protein is Winged helix repair factor 1 of Xenopus laevis (African clawed frog).